We begin with the raw amino-acid sequence, 587 residues long: Glutamine--tRNA ligase (587 aa).

Positions 58–68 match the 'HIGH' region motif; sequence PEPNGYLHIGH. ATP contacts are provided by residues 59–61 and 65–71; these read EPN and HIGHAKS. 2 residues coordinate L-glutamine: Asp-91 and Tyr-240. ATP-binding positions include Thr-259 and 294-295; that span reads RL. Positions 301-305 match the 'KMSKS' region motif; it reads VTSKR.

Belongs to the class-I aminoacyl-tRNA synthetase family. As to quaternary structure, monomer.

The protein localises to the cytoplasm. The enzyme catalyses tRNA(Gln) + L-glutamine + ATP = L-glutaminyl-tRNA(Gln) + AMP + diphosphate. The protein is Glutamine--tRNA ligase of Bordetella bronchiseptica (strain ATCC BAA-588 / NCTC 13252 / RB50) (Alcaligenes bronchisepticus).